We begin with the raw amino-acid sequence, 125 residues long: Gem-associated protein 7 (125 aa).

An N-acetylmethionine modification is found at methionine 1. In terms of domain architecture, SUZ-C spans methionine 1 to glycine 29. The tract at residues methionine 1 to alanine 52 is disordered. Threonine 3 bears the Phosphothreonine mark. The Sm domain maps to arginine 59 to proline 125.

Belongs to the gemin-7 family. In terms of assembly, part of the core SMN complex that contains SMN1, GEMIN2/SIP1, DDX20/GEMIN3, GEMIN4, GEMIN5, GEMIN6, GEMIN7, GEMIN8 and STRAP/UNRIP. Part of the SMN-Sm complex that contains SMN1, GEMIN2/SIP1, DDX20/GEMIN3, GEMIN4, GEMIN5, GEMIN6, GEMIN7, GEMIN8, STRAP/UNRIP and the Sm proteins SNRPB, SNRPD1, SNRPD2, SNRPD3, SNRPE, SNRPF and SNRPG. Interacts with GEMIN6; the interaction is direct. Interacts with STRAP/UNRIP; the interaction is direct. Interacts with GEMIN8; the interaction is direct. Interacts with SNRPB, SNRPD2, SNRPD3 and SNRPE; the interaction is direct.

Its subcellular location is the nucleus. It localises to the nucleoplasm. It is found in the gem. The protein localises to the cytoplasm. The SMN complex catalyzes the assembly of small nuclear ribonucleoproteins (snRNPs), the building blocks of the spliceosome, and thereby plays an important role in the splicing of cellular pre-mRNAs. Most spliceosomal snRNPs contain a common set of Sm proteins SNRPB, SNRPD1, SNRPD2, SNRPD3, SNRPE, SNRPF and SNRPG that assemble in a heptameric protein ring on the Sm site of the small nuclear RNA to form the core snRNP (Sm core). In the cytosol, the Sm proteins SNRPD1, SNRPD2, SNRPE, SNRPF and SNRPG are trapped in an inactive 6S pICln-Sm complex by the chaperone CLNS1A that controls the assembly of the core snRNP. To assemble core snRNPs, the SMN complex accepts the trapped 5Sm proteins from CLNS1A forming an intermediate. Binding of snRNA inside 5Sm triggers eviction of the SMN complex, thereby allowing binding of SNRPD3 and SNRPB to complete assembly of the core snRNP. The polypeptide is Gem-associated protein 7 (GEMIN7) (Bos taurus (Bovine)).